We begin with the raw amino-acid sequence, 1597 residues long: Transmembrane protein 131-like (1597 aa).

Residues 1–40 (MAGLRRPQSGAYRRTAAAVNLLLGVFQVLLSCCRPGGAQG) form the signal peptide. Residues 41–869 (QAFEPLPNVV…VVPGPSWEES (829 aa)) lie on the Extracellular side of the membrane. N-linked (GlcNAc...) asparagine glycans are attached at residues Asn-343, Asn-593, Asn-709, and Asn-846. The required for Wnt-signaling inhibition and LRP6 degradation stretch occupies residues 696-916 (DYGKVTSLIL…QNGSSSSQQN (221 aa)). A helical transmembrane segment spans residues 870–890 (FWRLTVFFVSLSLLGVILIAF). Over 891–1597 (QQAQYILMEF…SRDSSYCGNM (707 aa)) the chain is Cytoplasmic. The span at 907-917 (QNGSSSSQQNG) shows a compositional bias: low complexity. 3 disordered regions span residues 907–928 (QNGS…SHPH), 1096–1240 (AELK…EQRL), and 1252–1322 (DGAG…SDCD). Over residues 1213 to 1222 (RPCRRNKKRA) the composition is skewed to basic residues. Low complexity predominate over residues 1223-1239 (SAQASSSPRPSEQSEQR). Over residues 1269–1290 (PERREEDSYYQKSEKKCADKFC) the composition is skewed to basic and acidic residues. Over residues 1291–1319 (SDSSSDCGSSSGSVRASRGSWGSWSSSSS) the composition is skewed to low complexity.

Belongs to the TMEM131 family.

It is found in the cell membrane. The protein localises to the endoplasmic reticulum. The protein resides in the cytoplasm. In terms of biological role, in its membrane-associated form, antagonizes canonical Wnt signaling by triggering lysosome-dependent degradation of Wnt-activated LRP6. Regulates thymocyte proliferation. This Mus musculus (Mouse) protein is Transmembrane protein 131-like.